Here is a 532-residue protein sequence, read N- to C-terminus: NMDA receptor synaptonuclear signaling and neuronal migration factor (532 aa).

A lipid anchor (N-myristoyl glycine) is attached at Gly-2. The segment at 2–235 (GAAASRRRAL…FSFQTATTTM (234 aa)) is necessary and sufficient to elicit dendritic processes and synaptic contacts. 2 disordered regions span residues 34 to 67 (SQSHPENRNGADHLLADAYSGHEGSPEMQPAPHN) and 127 to 174 (RRQR…GCAK). Residues 38–48 (PENRNGADHLL) are compositionally biased toward basic and acidic residues. Residues 127–139 (RRQRERHPHHHSQ) show a composition bias toward basic residues. The span at 155-164 (PCQSWAGSRQ) shows a compositional bias: polar residues. Residue Ser-206 is modified to Phosphoserine. The Nuclear localization signal motif lies at 247-252 (RKRRKR). The interval 275-315 (RVKAQTFAERRERSFSRSWSDPTPMKADTSHDSRDSSDLQS) is disordered. Phosphoserine occurs at positions 292 and 294. The segment covering 302-311 (DTSHDSRDSS) has biased composition (basic and acidic residues).

This sequence belongs to the NSMF family. Interacts with KPNA1; the interaction occurs in a calcium-independent manner after synaptic NMDA receptor stimulation and is required for nuclear import of NSMF but is competed by CABP1. Interacts (via the central NLS-containing motif region) with CABP1 (via EF-hands 1 and 2); the interaction occurs in a calcium-dependent manner after synaptic NMDA receptor stimulation and prevents the nuclear import of NSMF. Cannot be competed by calmodulin. In terms of processing, proteolytically processed after NMDA receptor activation. Cleaved in a calcium-dependent and calpain-sensitive manner. Calpain cleavage is essential for the translocation process from dendrites to the nucleus. As to expression, expressed in the radiatum and pyramidale strata of the hippocampus (at protein level). Strongly expressed in the brain. Expressed in the sensory and motor cortex, hippocampus, olfactory bulb, thalamus and amygdala. In the olfactory bulb expressed in the granular cell layer, mitral cell layer and the glomerular layer. In the hippocampus highly expressed in the regions associated with neuronal cell types as CA1, CA2, CA3 and granule cells of the dentate gyrus. All isoforms have been detected in the molecular layers of the hippocampus.

It localises to the nucleus. The protein localises to the nucleus envelope. Its subcellular location is the nucleus membrane. The protein resides in the nucleus matrix. It is found in the cytoplasm. It localises to the cell cortex. The protein localises to the cytoskeleton. Its subcellular location is the cell membrane. The protein resides in the cell projection. It is found in the dendrite. It localises to the synapse. The protein localises to the synaptosome. Its subcellular location is the postsynaptic density. The protein resides in the membrane. Functionally, couples NMDA-sensitive glutamate receptor signaling to the nucleus and triggers long-lasting changes in the cytoarchitecture of dendrites and spine synapse processes. Part of the cAMP response element-binding protein (CREB) shut-off signaling pathway. Stimulates outgrowth of olfactory axons and migration of gonadotropin-releasing hormone (GnRH) and luteinizing-hormone-releasing hormone (LHRH) neuronal cells. The sequence is that of NMDA receptor synaptonuclear signaling and neuronal migration factor (Nsmf) from Rattus norvegicus (Rat).